We begin with the raw amino-acid sequence, 148 residues long: Transcriptional regulator MraZ (148 aa).

SpoVT-AbrB domains are found at residues 5–51 (AAAL…PSPA) and 80–123 (ARTE…SEAG).

The protein belongs to the MraZ family. As to quaternary structure, forms oligomers.

It is found in the cytoplasm. Its subcellular location is the nucleoid. This is Transcriptional regulator MraZ from Dechloromonas aromatica (strain RCB).